Here is a 306-residue protein sequence, read N- to C-terminus: UDP-3-O-acyl-N-acetylglucosamine deacetylase (306 aa).

The Zn(2+) site is built by His-79, His-238, and Asp-242. His-265 acts as the Proton donor in catalysis.

It belongs to the LpxC family. It depends on Zn(2+) as a cofactor.

The catalysed reaction is a UDP-3-O-[(3R)-3-hydroxyacyl]-N-acetyl-alpha-D-glucosamine + H2O = a UDP-3-O-[(3R)-3-hydroxyacyl]-alpha-D-glucosamine + acetate. It functions in the pathway glycolipid biosynthesis; lipid IV(A) biosynthesis; lipid IV(A) from (3R)-3-hydroxytetradecanoyl-[acyl-carrier-protein] and UDP-N-acetyl-alpha-D-glucosamine: step 2/6. Functionally, catalyzes the hydrolysis of UDP-3-O-myristoyl-N-acetylglucosamine to form UDP-3-O-myristoylglucosamine and acetate, the committed step in lipid A biosynthesis. In Idiomarina loihiensis (strain ATCC BAA-735 / DSM 15497 / L2-TR), this protein is UDP-3-O-acyl-N-acetylglucosamine deacetylase.